The sequence spans 142 residues: Putative pre-16S rRNA nuclease (142 aa).

It belongs to the YqgF nuclease family.

It is found in the cytoplasm. Could be a nuclease involved in processing of the 5'-end of pre-16S rRNA. The chain is Putative pre-16S rRNA nuclease from Desulfitobacterium hafniense (strain DSM 10664 / DCB-2).